The primary structure comprises 529 residues: Bifunctional purine biosynthesis protein PurH (529 aa).

In terms of domain architecture, MGS-like spans 1–148 (MQQRRPVRRA…KNHKDVAIVV (148 aa)). Lysine 287 bears the N6-acetyllysine mark.

Belongs to the PurH family.

The enzyme catalyses (6R)-10-formyltetrahydrofolate + 5-amino-1-(5-phospho-beta-D-ribosyl)imidazole-4-carboxamide = 5-formamido-1-(5-phospho-D-ribosyl)imidazole-4-carboxamide + (6S)-5,6,7,8-tetrahydrofolate. It carries out the reaction IMP + H2O = 5-formamido-1-(5-phospho-D-ribosyl)imidazole-4-carboxamide. It participates in purine metabolism; IMP biosynthesis via de novo pathway; 5-formamido-1-(5-phospho-D-ribosyl)imidazole-4-carboxamide from 5-amino-1-(5-phospho-D-ribosyl)imidazole-4-carboxamide (10-formyl THF route): step 1/1. Its pathway is purine metabolism; IMP biosynthesis via de novo pathway; IMP from 5-formamido-1-(5-phospho-D-ribosyl)imidazole-4-carboxamide: step 1/1. In Escherichia coli (strain SMS-3-5 / SECEC), this protein is Bifunctional purine biosynthesis protein PurH.